Reading from the N-terminus, the 329-residue chain is 4-hydroxythreonine-4-phosphate dehydrogenase (329 aa).

Positions 136 and 137 each coordinate substrate. A divalent metal cation contacts are provided by histidine 166, histidine 211, and histidine 266. Substrate-binding residues include lysine 274, asparagine 283, and arginine 292.

Belongs to the PdxA family. Homodimer. The cofactor is Zn(2+). Mg(2+) serves as cofactor. Co(2+) is required as a cofactor.

The protein localises to the cytoplasm. It carries out the reaction 4-(phosphooxy)-L-threonine + NAD(+) = 3-amino-2-oxopropyl phosphate + CO2 + NADH. The protein operates within cofactor biosynthesis; pyridoxine 5'-phosphate biosynthesis; pyridoxine 5'-phosphate from D-erythrose 4-phosphate: step 4/5. Catalyzes the NAD(P)-dependent oxidation of 4-(phosphooxy)-L-threonine (HTP) into 2-amino-3-oxo-4-(phosphooxy)butyric acid which spontaneously decarboxylates to form 3-amino-2-oxopropyl phosphate (AHAP). This chain is 4-hydroxythreonine-4-phosphate dehydrogenase, found in Escherichia coli (strain 55989 / EAEC).